Reading from the N-terminus, the 430-residue chain is Tol-Pal system protein TolB (430 aa).

The signal sequence occupies residues 1–21 (MKQALRVAFGFLILWASVLHA).

It belongs to the TolB family. As to quaternary structure, the Tol-Pal system is composed of five core proteins: the inner membrane proteins TolA, TolQ and TolR, the periplasmic protein TolB and the outer membrane protein Pal. They form a network linking the inner and outer membranes and the peptidoglycan layer.

Its subcellular location is the periplasm. In terms of biological role, part of the Tol-Pal system, which plays a role in outer membrane invagination during cell division and is important for maintaining outer membrane integrity. TolB occupies a key intermediary position in the Tol-Pal system because it communicates directly with both membrane-embedded components, Pal in the outer membrane and TolA in the inner membrane. The chain is Tol-Pal system protein TolB from Escherichia coli O139:H28 (strain E24377A / ETEC).